Reading from the N-terminus, the 260-residue chain is MAEAGQPRALPTAFAPPPPLWKHFTPGNLKKLEEIKREASKGEDGKARRKDWTPAELRALDLSPELGFLVPPEIPTKGHYSVFGELQSLSTALPSLQEQGIEQLYPSPPTETDREAPSQPSRPFNHAYYLLKISKSLLLNFLEFVGVLSVAPEQFQAKVEDLRNLFINAHHLLNLYRPHQARESLIMMMEEQLKRSREEIEQMDKLHTEIKGFLDQLKAQGVDVDSAAESVSKATKKDDTSNKRAAEDSGLIWDILGEID.

The tract at residues Met1–Trp21 is disordered.

It belongs to the Mediator complex subunit 7 family. Component of the Mediator complex.

It is found in the nucleus. In terms of biological role, component of the Mediator complex, a coactivator involved in the regulated transcription of nearly all RNA polymerase II-dependent genes. Mediator functions as a bridge to convey information from gene-specific regulatory proteins to the basal RNA polymerase II transcription machinery. Mediator is recruited to promoters by direct interactions with regulatory proteins and serves as a scaffold for the assembly of a functional preinitiation complex with RNA polymerase II and the general transcription factors. In Aspergillus clavatus (strain ATCC 1007 / CBS 513.65 / DSM 816 / NCTC 3887 / NRRL 1 / QM 1276 / 107), this protein is Mediator of RNA polymerase II transcription subunit 7 (med7).